A 211-amino-acid polypeptide reads, in one-letter code: LexA repressor (211 aa).

A DNA-binding region (H-T-H motif) is located at residues 31–51; sequence RAEISKELGFRSPNAAEEHLK. Catalysis depends on for autocatalytic cleavage activity residues Ser127 and Lys164.

The protein belongs to the peptidase S24 family. In terms of assembly, homodimer.

It catalyses the reaction Hydrolysis of Ala-|-Gly bond in repressor LexA.. Its function is as follows. Represses a number of genes involved in the response to DNA damage (SOS response), including recA and lexA. In the presence of single-stranded DNA, RecA interacts with LexA causing an autocatalytic cleavage which disrupts the DNA-binding part of LexA, leading to derepression of the SOS regulon and eventually DNA repair. The chain is LexA repressor from Pasteurella multocida (strain Pm70).